The chain runs to 120 residues: NAD(P)H-quinone oxidoreductase subunit 3, chloroplastic (120 aa).

3 helical membrane-spanning segments follow: residues 7–27 (YDSFWIFLLVCISIPLLAFSI), 63–83 (YMFALVFTVFDVETVFLYPWA), and 89–109 (LGLFAFVEVIVFIFILIVGLV).

It belongs to the complex I subunit 3 family. NDH is composed of at least 16 different subunits, 5 of which are encoded in the nucleus.

It is found in the plastid. Its subcellular location is the chloroplast thylakoid membrane. It carries out the reaction a plastoquinone + NADH + (n+1) H(+)(in) = a plastoquinol + NAD(+) + n H(+)(out). It catalyses the reaction a plastoquinone + NADPH + (n+1) H(+)(in) = a plastoquinol + NADP(+) + n H(+)(out). Functionally, NDH shuttles electrons from NAD(P)H:plastoquinone, via FMN and iron-sulfur (Fe-S) centers, to quinones in the photosynthetic chain and possibly in a chloroplast respiratory chain. The immediate electron acceptor for the enzyme in this species is believed to be plastoquinone. Couples the redox reaction to proton translocation, and thus conserves the redox energy in a proton gradient. This Adiantum capillus-veneris (Maidenhair fern) protein is NAD(P)H-quinone oxidoreductase subunit 3, chloroplastic.